The sequence spans 176 residues: RNA polymerase sigma factor SigZ (176 aa).

The Polymerase core binding signature appears at 30 to 43 (DLLQIVFMKIQVHL). Residues 125–144 (QKELSEKLGISYSGAKSRVQ) constitute a DNA-binding region (H-T-H motif).

The protein belongs to the sigma-70 factor family. ECF subfamily.

Its function is as follows. Sigma factors are initiation factors that promote the attachment of RNA polymerase to specific initiation sites and are then released. This Bacillus subtilis (strain 168) protein is RNA polymerase sigma factor SigZ (sigZ).